The following is a 244-amino-acid chain: Derlin-2.1 (244 aa).

Residues 1 to 21 (MAQAVEEWYKQMPIITRSYLT) lie on the Cytoplasmic side of the membrane. The chain crosses the membrane as a helical span at residues 22 to 42 (AAVVTTVGCSLEIISPYNLYL). Residues 43–96 (NPTLVVKQYQFWRLVTNFLYFRKMDLDFLFHMFFLARYCKLLEENSFRGKTADF) lie on the Lumenal side of the membrane. A helical transmembrane segment spans residues 97–117 (LYMLLFGATVLTGIVLIGGMI). Over 118–121 (PYLS) the chain is Cytoplasmic. A helical transmembrane segment spans residues 122 to 142 (VSFSKIIFLSNSLTFMMVYVW). Residues 143-152 (SKQNPYIHMS) lie on the Lumenal side of the membrane. A helical transmembrane segment spans residues 153 to 173 (FLGLFTFTAAYLPWVLLGFSI). The Cytoplasmic segment spans residues 174–244 (LVGASAWGDF…HAPFDEIHQD (71 aa)).

The protein belongs to the derlin family.

It localises to the endoplasmic reticulum membrane. May be involved in the degradation process of specific misfolded endoplasmic reticulum (ER) luminal proteins. The sequence is that of Derlin-2.1 (DER2.1) from Arabidopsis thaliana (Mouse-ear cress).